A 153-amino-acid chain; its full sequence is Arginine repressor (153 aa).

This sequence belongs to the ArgR family.

The protein resides in the cytoplasm. The protein operates within amino-acid biosynthesis; L-arginine biosynthesis [regulation]. In terms of biological role, regulates arginine biosynthesis genes. In Haemophilus ducreyi (strain 35000HP / ATCC 700724), this protein is Arginine repressor.